Consider the following 151-residue polypeptide: Ribosome maturation factor RimP (151 aa).

This sequence belongs to the RimP family.

It localises to the cytoplasm. In terms of biological role, required for maturation of 30S ribosomal subunits. The sequence is that of Ribosome maturation factor RimP from Mannheimia succiniciproducens (strain KCTC 0769BP / MBEL55E).